A 280-amino-acid chain; its full sequence is Eukaryotic translation initiation factor 3 subunit F-1 (280 aa).

The region spanning 8-138 (VRVHPVVLFQ…LRAYVCIQLG (131 aa)) is the MPN domain.

It belongs to the eIF-3 subunit F family. In terms of assembly, component of the eukaryotic translation initiation factor 3 (eIF-3) complex. The eIF-3 complex interacts with pix.

The protein resides in the cytoplasm. Functionally, component of the eukaryotic translation initiation factor 3 (eIF-3) complex, which is involved in protein synthesis of a specialized repertoire of mRNAs and, together with other initiation factors, stimulates binding of mRNA and methionyl-tRNAi to the 40S ribosome. The eIF-3 complex specifically targets and initiates translation of a subset of mRNAs involved in cell proliferation. This Drosophila virilis (Fruit fly) protein is Eukaryotic translation initiation factor 3 subunit F-1.